Reading from the N-terminus, the 450-residue chain is Ribosomal protein uS12 methylthiotransferase RimO (450 aa).

One can recognise an MTTase N-terminal domain in the interval 7–123 (QKVSMVSLGC…IAEILAEKSG (117 aa)). Positions 16, 52, 86, 161, 165, and 168 each coordinate [4Fe-4S] cluster. Residues 147–377 (SSPAWFSYLK…MRIQARLSFK (231 aa)) form the Radical SAM core domain. The 69-residue stretch at 380 to 448 (RELIGTTEQV…DYDLIGEIQE (69 aa)) folds into the TRAM domain.

The protein belongs to the methylthiotransferase family. RimO subfamily. Requires [4Fe-4S] cluster as cofactor.

It is found in the cytoplasm. The enzyme catalyses L-aspartate(89)-[ribosomal protein uS12]-hydrogen + (sulfur carrier)-SH + AH2 + 2 S-adenosyl-L-methionine = 3-methylsulfanyl-L-aspartate(89)-[ribosomal protein uS12]-hydrogen + (sulfur carrier)-H + 5'-deoxyadenosine + L-methionine + A + S-adenosyl-L-homocysteine + 2 H(+). Catalyzes the methylthiolation of an aspartic acid residue of ribosomal protein uS12. The polypeptide is Ribosomal protein uS12 methylthiotransferase RimO (Pelobacter propionicus (strain DSM 2379 / NBRC 103807 / OttBd1)).